Consider the following 297-residue polypeptide: uncharacterized protein (297 aa).

5 helical membrane-spanning segments follow: residues 114-136 (YNRW…LSSG), 150-170 (LLYD…VFNV), 197-217 (MPIV…GVHL), 227-247 (AFTV…KAMI), and 269-289 (FINT…PGLL).

The protein belongs to the ThrE exporter (TC 2.A.79) family.

The protein localises to the cell inner membrane. This is an uncharacterized protein from Haemophilus influenzae (strain ATCC 51907 / DSM 11121 / KW20 / Rd).